A 104-amino-acid polypeptide reads, in one-letter code: Succinate dehydrogenase assembly factor 4, mitochondrial (104 aa).

A mitochondrion-targeting transit peptide spans 1–30 (MVSTTLSVSRMTFVWRAARPSLLNHSLRKM). Residues 29–104 (KMSYQEGKPE…WERKGRCIDF (76 aa)) are disordered. 2 stretches are compositionally biased toward basic and acidic residues: residues 63–83 (EREP…EKGG) and 91–104 (RYGD…CIDF).

The protein belongs to the SDHAF4 family. In terms of assembly, interacts with Sdha in its FAD-bound form.

It localises to the mitochondrion matrix. Its function is as follows. Plays an essential role in the assembly of succinate dehydrogenase (SDH), an enzyme complex (also referred to as respiratory complex II) that is a component of both the tricarboxylic acid (TCA) cycle and the mitochondrial electron transport chain, and which couples the oxidation of succinate to fumarate with the reduction of ubiquinone (coenzyme Q) to ubiquinol. Binds to the flavoprotein subunit Sdha in its FAD-bound form, blocking the generation of excess reactive oxygen species (ROS) and facilitating its assembly with the iron-sulfur protein subunit Sdhb into the SDH catalytic dimer. The protein is Succinate dehydrogenase assembly factor 4, mitochondrial of Mus musculus (Mouse).